A 175-amino-acid chain; its full sequence is Gamma-crystallin B (175 aa).

2 Beta/gamma crystallin 'Greek key' domains span residues 2–40 (GKITFFEDRSFQGRCYECSSDCPNLQTYFSRCNSVRVDS) and 41–83 (GCWM…CLIP). A connecting peptide region spans residues 84-88 (QHSGT). Beta/gamma crystallin 'Greek key' domains lie at 89-129 (YRMR…NVME) and 130-172 (GCWV…RRVM).

It belongs to the beta/gamma-crystallin family.

In terms of biological role, crystallins are the dominant structural components of the vertebrate eye lens. This Mus musculus (Mouse) protein is Gamma-crystallin B (Crygb).